The primary structure comprises 143 residues: Small ribosomal subunit protein uS12 (143 aa).

Basic residues predominate over residues 1 to 19 (MGKPKGIRAARKLKTHRQA). Positions 1–21 (MGKPKGIRAARKLKTHRQAQR) are disordered. Pro62 carries the post-translational modification Hydroxyproline.

The protein belongs to the universal ribosomal protein uS12 family. Component of the 40S small ribosomal subunit.

It localises to the cytoplasm. It is found in the cytosol. The protein localises to the rough endoplasmic reticulum. This chain is Small ribosomal subunit protein uS12 (rps-23), found in Brugia malayi (Filarial nematode worm).